We begin with the raw amino-acid sequence, 528 residues long: Putative ABC transporter ATP-binding protein MA_1418 (528 aa).

2 consecutive ABC transporter domains span residues 2-242 and 262-494; these read IELR…TNLT and ISVK…SDYK. ATP-binding positions include 36 to 43 and 294 to 301; these read GHSAAGKT and GENGSGKT.

Belongs to the ABC transporter superfamily.

It localises to the cell membrane. Its function is as follows. Probably part of an ABC transporter complex. Responsible for energy coupling to the transport system. This is Putative ABC transporter ATP-binding protein MA_1418 from Methanosarcina acetivorans (strain ATCC 35395 / DSM 2834 / JCM 12185 / C2A).